We begin with the raw amino-acid sequence, 538 residues long: Phosphoenolpyruvate carboxykinase (ATP) (538 aa).

Arginine 61, tyrosine 195, and lysine 201 together coordinate substrate. ATP-binding positions include lysine 201, histidine 220, and 236–244 (GLSGTGKTT). Mn(2+) is bound by residues lysine 201 and histidine 220. Aspartate 257 is a binding site for Mn(2+). ATP is bound by residues glutamate 285, arginine 323, and threonine 449. Position 323 (arginine 323) interacts with substrate.

It belongs to the phosphoenolpyruvate carboxykinase (ATP) family. Mn(2+) serves as cofactor.

Its subcellular location is the cytoplasm. The enzyme catalyses oxaloacetate + ATP = phosphoenolpyruvate + ADP + CO2. The protein operates within carbohydrate biosynthesis; gluconeogenesis. In terms of biological role, involved in the gluconeogenesis. Catalyzes the conversion of oxaloacetate (OAA) to phosphoenolpyruvate (PEP) through direct phosphoryl transfer between the nucleoside triphosphate and OAA. The sequence is that of Phosphoenolpyruvate carboxykinase (ATP) from Nitrobacter hamburgensis (strain DSM 10229 / NCIMB 13809 / X14).